Here is a 395-residue protein sequence, read N- to C-terminus: S-adenosylmethionine synthase (395 aa).

His16 provides a ligand contact to ATP. Asp18 lines the Mg(2+) pocket. A K(+)-binding site is contributed by Glu44. Residues Glu57 and Gln100 each contribute to the L-methionine site. The flexible loop stretch occupies residues 100–110 (QSPDIAQGVDR). Residues 167-169 (DAK), 233-234 (RF), Asp242, 248-249 (RK), Ala265, and Lys269 each bind ATP. Residue Asp242 coordinates L-methionine. Position 273 (Lys273) interacts with L-methionine.

This sequence belongs to the AdoMet synthase family. Homotetramer; dimer of dimers. The cofactor is Mg(2+). It depends on K(+) as a cofactor.

Its subcellular location is the cytoplasm. It carries out the reaction L-methionine + ATP + H2O = S-adenosyl-L-methionine + phosphate + diphosphate. It participates in amino-acid biosynthesis; S-adenosyl-L-methionine biosynthesis; S-adenosyl-L-methionine from L-methionine: step 1/1. Functionally, catalyzes the formation of S-adenosylmethionine (AdoMet) from methionine and ATP. The overall synthetic reaction is composed of two sequential steps, AdoMet formation and the subsequent tripolyphosphate hydrolysis which occurs prior to release of AdoMet from the enzyme. The polypeptide is S-adenosylmethionine synthase (Burkholderia thailandensis (strain ATCC 700388 / DSM 13276 / CCUG 48851 / CIP 106301 / E264)).